The primary structure comprises 755 residues: Biodegradative arginine decarboxylase (755 aa).

At K386 the chain carries N6-(pyridoxal phosphate)lysine.

This sequence belongs to the Orn/Lys/Arg decarboxylase class-I family. Homodecamer. The basic unit is a homodimer, organized into a ring of giving a pentamer of five homodimers. The cofactor is pyridoxal 5'-phosphate.

The protein localises to the cytoplasm. It carries out the reaction L-arginine + H(+) = agmatine + CO2. With respect to regulation, homodimers are probably inactive, their assembly into a homodecamer at low pH requires neutralization of negatively charged residues. This uses cytoplasmic protons, contributing pH regulation and stabilizes the homodecamer. In terms of biological role, component of the acid-resistance (AR) system allowing enteric pathogens to survive the acidic environment in the stomach. ADC can be found in two forms: biodegradative (this enzyme) and biosynthetic (speA). The biodegradative form plays a role in regulating pH by consuming proteins. Converts arginine imported by AdiC to agmatine which is then exported by AdiC. The polypeptide is Biodegradative arginine decarboxylase (adiA) (Escherichia coli (strain K12)).